The following is a 633-amino-acid chain: uncharacterized protein (633 aa).

Residues 1 to 188 are disordered; the sequence is MNNRGGFSHP…GQSSFYNSSY (188 aa). Low complexity-rich tracts occupy residues 32 to 80 and 104 to 148; these read GQPQ…GGNN and NNGN…TNSR. Over residues 152–178 the composition is skewed to gly residues; the sequence is RGGSSRGGSSRGGNSGSSRGGSRGGYR. Residues 580-607 are a coiled coil; that stretch reads KSKNWTVDQASDELKKLSKNLRLLVSKH. Residues 611 to 633 form a disordered region; it reads TKFQPPSADHTTQFEQDDEEEEN.

This is an uncharacterized protein from Dictyostelium discoideum (Social amoeba).